A 310-amino-acid chain; its full sequence is Methionyl-tRNA formyltransferase (310 aa).

110-113 (SLLP) provides a ligand contact to (6S)-5,6,7,8-tetrahydrofolate.

It belongs to the Fmt family.

It carries out the reaction L-methionyl-tRNA(fMet) + (6R)-10-formyltetrahydrofolate = N-formyl-L-methionyl-tRNA(fMet) + (6S)-5,6,7,8-tetrahydrofolate + H(+). Its function is as follows. Attaches a formyl group to the free amino group of methionyl-tRNA(fMet). The formyl group appears to play a dual role in the initiator identity of N-formylmethionyl-tRNA by promoting its recognition by IF2 and preventing the misappropriation of this tRNA by the elongation apparatus. The protein is Methionyl-tRNA formyltransferase of Streptomyces avermitilis (strain ATCC 31267 / DSM 46492 / JCM 5070 / NBRC 14893 / NCIMB 12804 / NRRL 8165 / MA-4680).